The sequence spans 215 residues: Chymomexicain (215 aa).

Intrachain disulfides connect cysteine 22–cysteine 63, cysteine 56–cysteine 96, and cysteine 154–cysteine 201. Cysteine 25 is an active-site residue. Active-site residues include histidine 160 and asparagine 176.

This sequence belongs to the peptidase C1 family.

Its function is as follows. Cysteine protease. This Jacaratia mexicana (Wild papaya) protein is Chymomexicain.